We begin with the raw amino-acid sequence, 271 residues long: Neurexophilin-1 (271 aa).

The N-terminal stretch at 1–21 (MQAACWYVLLLLQPTVYLVTC) is a signal peptide. The II stretch occupies residues 22–97 (ANLTNGGKSE…WDWLRNSTDL (76 aa)). 6 N-linked (GlcNAc...) asparagine glycosylation sites follow: Asn23, Asn68, Asn93, Asn146, Asn156, and Asn162. Residues 98 to 176 (QEPRPRAKRR…LVPPTKIVEF (79 aa)) are III. An IV (linker domain) region spans residues 177-185 (DLAQQTVID). Residues 186-271 (AKDSKSFNCR…HSDTPYFPSG (86 aa)) are v (Cys-rich).

It belongs to the neurexophilin family. In terms of processing, may be proteolytically processed at the boundary between the N-terminal non-conserved and the central conserved domain in neuron-like cells. As to expression, highest level in brain.

It is found in the secreted. May be signaling molecules that resemble neuropeptides. Ligand for alpha-neurexins. The protein is Neurexophilin-1 (Nxph1) of Rattus norvegicus (Rat).